The sequence spans 234 residues: MTKKNASIPLRYLSSIVFVVFLPWWIPLSFNKSLESWVTNWWNTSQSETFLNDIQEKAILEKFIELEELFLLDEMIKEFPERRLEKLRIGLQKETIQLIKMHDEDHIHTIFHFSTNTICFVILSGYSILCNEELFILNSWVQEFLYNLSDTIKAFSILFVTDLCIGFHSPRGWELLIGYVYNDFGLAHNDNDIILSVLVSTFPVVLDTFFKYWLFSYLNRVSPSLVVIYHSMTE.

A run of 4 helical transmembrane segments spans residues 8–28, 117–137, 157–177, and 193–213; these read IPLR…WIPL, TICF…LFIL, ILFV…ELLI, and IILS…FKYW.

This sequence belongs to the CemA family.

Its subcellular location is the plastid. It localises to the chloroplast inner membrane. The catalysed reaction is K(+)(in) + H(+)(out) = K(+)(out) + H(+)(in). Functionally, contributes to K(+)/H(+) antiport activity by supporting proton efflux to control proton extrusion and homeostasis in chloroplasts in a light-dependent manner to modulate photosynthesis. Prevents excessive induction of non-photochemical quenching (NPQ) under continuous-light conditions. Indirectly promotes efficient inorganic carbon uptake into chloroplasts. The protein is Potassium/proton antiporter CemA of Citrus sinensis (Sweet orange).